The chain runs to 235 residues: Ubiquinone/menaquinone biosynthesis C-methyltransferase UbiE (235 aa).

S-adenosyl-L-methionine-binding residues include Thr60 and Asp81.

It belongs to the class I-like SAM-binding methyltransferase superfamily. MenG/UbiE family.

It carries out the reaction a 2-demethylmenaquinol + S-adenosyl-L-methionine = a menaquinol + S-adenosyl-L-homocysteine + H(+). It catalyses the reaction a 2-methoxy-6-(all-trans-polyprenyl)benzene-1,4-diol + S-adenosyl-L-methionine = a 5-methoxy-2-methyl-3-(all-trans-polyprenyl)benzene-1,4-diol + S-adenosyl-L-homocysteine + H(+). It participates in quinol/quinone metabolism; menaquinone biosynthesis; menaquinol from 1,4-dihydroxy-2-naphthoate: step 2/2. The protein operates within cofactor biosynthesis; ubiquinone biosynthesis. In terms of biological role, methyltransferase required for the conversion of demethylmenaquinol (DMKH2) to menaquinol (MKH2) and the conversion of 2-polyprenyl-6-methoxy-1,4-benzoquinol (DDMQH2) to 2-polyprenyl-3-methyl-6-methoxy-1,4-benzoquinol (DMQH2). The protein is Ubiquinone/menaquinone biosynthesis C-methyltransferase UbiE of Geotalea daltonii (strain DSM 22248 / JCM 15807 / FRC-32) (Geobacter daltonii).